The sequence spans 118 residues: Phosphoribosyl-AMP cyclohydrolase (118 aa).

Residue Asp-87 participates in Mg(2+) binding. Residue Cys-88 coordinates Zn(2+). Asp-89 and Asp-91 together coordinate Mg(2+). Zn(2+) contacts are provided by Cys-104 and Cys-111.

The protein belongs to the PRA-CH family. In terms of assembly, homodimer. Requires Mg(2+) as cofactor. It depends on Zn(2+) as a cofactor.

It localises to the cytoplasm. The catalysed reaction is 1-(5-phospho-beta-D-ribosyl)-5'-AMP + H2O = 1-(5-phospho-beta-D-ribosyl)-5-[(5-phospho-beta-D-ribosylamino)methylideneamino]imidazole-4-carboxamide. Its pathway is amino-acid biosynthesis; L-histidine biosynthesis; L-histidine from 5-phospho-alpha-D-ribose 1-diphosphate: step 3/9. In terms of biological role, catalyzes the hydrolysis of the adenine ring of phosphoribosyl-AMP. This chain is Phosphoribosyl-AMP cyclohydrolase, found in Corynebacterium glutamicum (strain R).